The sequence spans 84 residues: Anaphase-promoting complex subunit 11 (84 aa).

The RING-type; atypical zinc finger occupies 34-77; the sequence is CPDCKLPGDDCPLIWGACNHAFHLHCILKWVNSQTSQAHCPMCR.

This sequence belongs to the RING-box family. Part of the APC/C complex composed of at least 10 subunits. Interacts with APC2.

It localises to the cytoplasm. The protein localises to the nucleus. It functions in the pathway protein modification; protein ubiquitination. Functionally, component of the anaphase promoting complex/cyclosome (APC/C), a cell cycle-regulated E3 ubiquitin-protein ligase complex that controls progression through mitosis and the G1 phase of the cell cycle. The APC/C complex controls several key steps in the cell cycle by mediating ubiquitination and subsequent degradation of target proteins such as cyclins. The APC/C complex is required for the female gametophyte development and is involved in several aspect of development by controlling cell division and cell elongation. Involved in the control of endoreduplication. May recruit the E2 ubiquitin-conjugating enzymes to the complex. In Arabidopsis thaliana (Mouse-ear cress), this protein is Anaphase-promoting complex subunit 11.